The following is a 241-amino-acid chain: Carboxy-S-adenosyl-L-methionine synthase (241 aa).

Residues Y38, G63–S65, D88–N89, D116–I117, N131, and R198 contribute to the S-adenosyl-L-methionine site.

The protein belongs to the class I-like SAM-binding methyltransferase superfamily. Cx-SAM synthase family. In terms of assembly, homodimer.

It catalyses the reaction prephenate + S-adenosyl-L-methionine = carboxy-S-adenosyl-L-methionine + 3-phenylpyruvate + H2O. Functionally, catalyzes the conversion of S-adenosyl-L-methionine (SAM) to carboxy-S-adenosyl-L-methionine (Cx-SAM). This chain is Carboxy-S-adenosyl-L-methionine synthase, found in Pseudoalteromonas translucida (strain TAC 125).